Here is a 94-residue protein sequence, read N- to C-terminus: ESAT-6-like protein EsxL (94 aa).

The protein belongs to the WXG100 family. ESAT-6 subfamily. As to quaternary structure, strongly interacts with EsxK to form a heterodimeric complex under reducing conditions. The complex is regulated by the redox state of EsxL.

It localises to the secreted. Its function is as follows. Induces apoptosis of host cells. Is immunogenic with highly specific seroreactivity towards TB patients' serum. The polypeptide is ESAT-6-like protein EsxL (Mycobacterium tuberculosis (strain ATCC 25618 / H37Rv)).